A 212-amino-acid chain; its full sequence is Telomere repeats-binding bouquet formation protein 2 (212 aa).

It belongs to the TERB2 family. In terms of assembly, component of the MAJIN-TERB1-TERB2 complex.

Functionally, meiosis-specific telomere-associated protein involved in meiotic telomere attachment to the nucleus inner membrane, a crucial step for homologous pairing and synapsis. Component of the MAJIN-TERB1-TERB2 complex, which promotes telomere cap exchange by mediating attachment of telomeric DNA to the inner nuclear membrane and replacement of the protective cap of telomeric chromosomes: in early meiosis, the MAJIN-TERB1-TERB2 complex associates with telomeric DNA and the shelterin/telosome complex. During prophase, the complex matures and promotes release of the shelterin/telosome complex from telomeric DNA. This chain is Telomere repeats-binding bouquet formation protein 2, found in Danio rerio (Zebrafish).